A 178-amino-acid chain; its full sequence is Caveolin-1 (178 aa).

Ser-2 bears the N-acetylserine mark. Ser-2 is subject to Phosphoserine. Positions 2 to 94 are required for homooligomerization; it reads SGGKYVDSEG…WKASFTTFTV (93 aa). Residues 2 to 104 are Cytoplasmic-facing; that stretch reads SGGKYVDSEG…TKYWFYRLLS (103 aa). At Lys-5 the chain carries N6-acetyllysine; alternate. Residue Lys-5 forms a Glycyl lysine isopeptide (Lys-Gly) (interchain with G-Cter in ubiquitin); alternate linkage. A Phosphotyrosine modification is found at Tyr-6. Ser-9 is subject to Phosphoserine. Position 14 is a phosphotyrosine; by ABL1 (Tyr-14). Position 25 is a phosphotyrosine (Tyr-25). Glycyl lysine isopeptide (Lys-Gly) (interchain with G-Cter in ubiquitin) cross-links involve residues Lys-26 and Lys-30. The residue at position 37 (Ser-37) is a Phosphoserine. Glycyl lysine isopeptide (Lys-Gly) (interchain with G-Cter in ubiquitin) cross-links involve residues Lys-39, Lys-47, and Lys-57. The interaction with CAVIN3 stretch occupies residues 82–94; the sequence is DGIWKASFTTFTV. The segment at residues 105-125 is an intramembrane region (helical); sequence ALFGIPMALIWGIYFAILSFL. The Cytoplasmic segment spans residues 126 to 178; that stretch reads HIWAVVPCIKSFLIEIQCISRVYSIYIHTVCDPLFEAIGKIFSNVRISLQKEI. The segment at 131-142 is interacts with SPRY1, SPRY2, SPRY3 and SPRY4; sequence VPCIKSFLIEIQ. Residues Cys-133, Cys-143, and Cys-156 are each lipidated (S-palmitoyl cysteine). An interacts with SPRY1, SPRY2, and SPRY4 region spans residues 149–160; the sequence is SIYIHTVCDPLF. The tract at residues 167–178 is interacts with SPRY1, SPRY2, SPRY3 and SPRY4; sequence FSNVRISLQKEI.

Belongs to the caveolin family. As to quaternary structure, homooligomer. Interacts with GLIPR2. Interacts with NOSTRIN. Interacts with SNAP25 and STX1A. Interacts (via the N-terminus) with DPP4; the interaction is direct. Interacts with CTNNB1, CDH1 and JUP. Interacts with PACSIN2; this interaction induces membrane tubulation. Interacts with SLC7A9. Interacts with BMX and BTK. Interacts with TGFBR1. Interacts with CAVIN3 (via leucine-zipper domain) in a cholesterol-sensitive manner. Interacts with CAVIN1. Interacts with EHD2 in a cholesterol-dependent manner. Forms a ternary complex with UBXN6 and VCP; mediates CAV1 targeting to lysosomes for degradation. Interacts with ABCG1; this interaction regulates ABCG1-mediated cholesterol efflux. Interacts with NEU3; this interaction enhances NEU3 sialidase activity within caveola. Interacts (via C-terminus) with SPRY1, SPRY2 (via C-terminus), SPRY3, and SPRY4. Interacts with IGFBP5; this interaction allows trafficking of IGFBP5 from the plasma membrane to the nucleus. Post-translationally, phosphorylated at Tyr-14 by ABL1 in response to oxidative stress. In terms of processing, ubiquitinated. Undergo monoubiquitination and multi- and/or polyubiquitination. Monoubiquitination of N-terminal lysines promotes integration in a ternary complex with UBXN6 and VCP which promotes oligomeric CAV1 targeting to lysosomes for degradation. Ubiquitinated by ZNRF1; leading to degradation and modulation of the TLR4-mediated immune response.

It localises to the golgi apparatus membrane. The protein localises to the cell membrane. It is found in the membrane. The protein resides in the caveola. Its subcellular location is the membrane raft. In terms of biological role, may act as a scaffolding protein within caveolar membranes. Forms a stable heterooligomeric complex with CAV2 that targets to lipid rafts and drives caveolae formation. Mediates the recruitment of CAVIN proteins (CAVIN1/2/3/4) to the caveolae. Interacts directly with G-protein alpha subunits and can functionally regulate their activity. Involved in the costimulatory signal essential for T-cell receptor (TCR)-mediated T-cell activation. Its binding to DPP4 induces T-cell proliferation and NF-kappa-B activation in a T-cell receptor/CD3-dependent manner. Recruits CTNNB1 to caveolar membranes and may regulate CTNNB1-mediated signaling through the Wnt pathway. Negatively regulates TGFB1-mediated activation of SMAD2/3 by mediating the internalization of TGFBR1 from membrane rafts leading to its subsequent degradation. Binds 20(S)-hydroxycholesterol (20(S)-OHC). The chain is Caveolin-1 (CAV1) from Aotus nancymaae (Ma's night monkey).